A 586-amino-acid chain; its full sequence is MFS-type transporter ucsD (586 aa).

Residues Met-1–Pro-56 form a disordered region. 2 stretches are compositionally biased toward low complexity: residues Thr-19 to Asp-36 and Asp-46 to Pro-56. N-linked (GlcNAc...) asparagine glycans are attached at residues Asn-25 and Asn-31. Transmembrane regions (helical) follow at residues Trp-65 to Ile-85, Ser-101 to Ala-121, Trp-131 to Asn-151, Gly-164 to Leu-184, Gly-192 to Leu-212, Trp-220 to Leu-240, Ala-263 to Tyr-283, and Val-290 to Thr-310. The N-linked (GlcNAc...) asparagine glycan is linked to Asn-324. The next 6 helical transmembrane spans lie at Val-330–Ile-350, Leu-368–Phe-388, Pro-393–Asp-413, Ala-420–Leu-440, Val-458–Phe-478, and Leu-532–Leu-552.

It belongs to the major facilitator superfamily.

It is found in the membrane. Functionally, MFS-type transporter; part of the gene cluster that mediates the biosynthesis of UCS1025A, a member of the pyrrolizidinone family that acts as a strong telomerase inhibitor and displays potent antibacterial and antitumor properties. These compounds share a hemiaminal-containing pyrrolizidinone core fused with a gamma-lactone, giving a furopyrrolizidine that is connected to a decalin fragment. This chain is MFS-type transporter ucsD, found in Acremonium sp.